Here is a 77-residue protein sequence, read N- to C-terminus: Fungal protease inhibitor F (77 aa).

An N-terminal signal peptide occupies residues 1–22 (MASKNLFVLFFIFALFAANIAA). Intrachain disulfides connect Cys25–Cys57, Cys36–Cys49, Cys40–Cys77, and Cys59–Cys71.

It belongs to the protease inhibitor I40 family. Hemolymph.

It localises to the secreted. Functionally, highly specific for fungal protease and subtilisin. This chain is Fungal protease inhibitor F, found in Bombyx mori (Silk moth).